The chain runs to 59 residues: Large ribosomal subunit protein bL32B (59 aa).

It belongs to the bacterial ribosomal protein bL32 family.

The polypeptide is Large ribosomal subunit protein bL32B (rpmF2) (Enterococcus faecalis (strain ATCC 700802 / V583)).